The following is an 891-amino-acid chain: DNA mismatch repair protein MutS (891 aa).

ATP is bound at residue 632-639 (GPNMAGKS).

This sequence belongs to the DNA mismatch repair MutS family.

Its function is as follows. This protein is involved in the repair of mismatches in DNA. It is possible that it carries out the mismatch recognition step. This protein has a weak ATPase activity. In Rhodopirellula baltica (strain DSM 10527 / NCIMB 13988 / SH1), this protein is DNA mismatch repair protein MutS.